We begin with the raw amino-acid sequence, 139 residues long: ATP synthase epsilon chain (139 aa).

It belongs to the ATPase epsilon chain family. As to quaternary structure, F-type ATPases have 2 components, CF(1) - the catalytic core - and CF(0) - the membrane proton channel. CF(1) has five subunits: alpha(3), beta(3), gamma(1), delta(1), epsilon(1). CF(0) has three main subunits: a, b and c.

Its subcellular location is the cell inner membrane. In terms of biological role, produces ATP from ADP in the presence of a proton gradient across the membrane. The polypeptide is ATP synthase epsilon chain (Nitrosospira multiformis (strain ATCC 25196 / NCIMB 11849 / C 71)).